The sequence spans 352 residues: Galactokinase (352 aa).

14 to 17 (EHTD) provides a ligand contact to substrate. Residues serine 46 and 96–102 (GAGLSSS) contribute to the ATP site. Mg(2+)-binding residues include serine 102 and glutamate 134. The active-site Proton acceptor is aspartate 146. Position 196 (tyrosine 196) interacts with substrate.

Belongs to the GHMP kinase family. GalK subfamily.

The protein resides in the cytoplasm. The enzyme catalyses alpha-D-galactose + ATP = alpha-D-galactose 1-phosphate + ADP + H(+). Its pathway is carbohydrate metabolism; galactose metabolism. In terms of biological role, catalyzes the transfer of the gamma-phosphate of ATP to D-galactose to form alpha-D-galactose-1-phosphate (Gal-1-P). This is Galactokinase from Thermosipho africanus (strain TCF52B).